A 688-amino-acid polypeptide reads, in one-letter code: Nucleolar protein 10 (688 aa).

Methionine 1 carries the N-acetylmethionine modification. Phosphoserine is present on serine 25. WD repeat units follow at residues 44-82 (ELIQ…CYDT), 88-124 (KFER…FHSQ), 127-163 (FYYK…RLNL), 170-205 (NPLQ…CWDP), 219-258 (NSVT…LYDL), 262-300 (KPLL…MWNK), and 304-341 (KIFT…IYYI). A coiled-coil region spans residues 423-446 (EYRKDKIRQKIEETRAQRVQLKKL). A Phosphoserine modification is found at serine 475. Residue threonine 481 is modified to Phosphothreonine. A Phosphoserine modification is found at serine 514. 2 coiled-coil regions span residues 514 to 589 (SEKR…TVLK) and 640 to 673 (SKQL…LRRS). Disordered stretches follow at residues 529-557 (LREK…EKAW) and 645-688 (FTLK…RSFH). The segment covering 648–663 (KRSEQQKKQQEAEKLH) has biased composition (basic and acidic residues). Over residues 664 to 688 (RQERKRLRRSAGHLKSRHKRGRSFH) the composition is skewed to basic residues.

Belongs to the WD repeat NOL10/ENP2 family.

It is found in the nucleus. The protein resides in the nucleolus. The sequence is that of Nucleolar protein 10 (NOL10) from Homo sapiens (Human).